The primary structure comprises 192 residues: A-type ATP synthase subunit E (192 aa).

Belongs to the V-ATPase E subunit family. As to quaternary structure, has multiple subunits with at least A(3), B(3), C, D, E, F, H, I and proteolipid K(x).

It is found in the cell membrane. Functionally, component of the A-type ATP synthase that produces ATP from ADP in the presence of a proton gradient across the membrane. This Metallosphaera sedula (strain ATCC 51363 / DSM 5348 / JCM 9185 / NBRC 15509 / TH2) protein is A-type ATP synthase subunit E.